Here is a 130-residue protein sequence, read N- to C-terminus: uncharacterized protein (130 aa).

Positions 41 to 64 (DDKDDHMDNQPKTSQTSKKVKLSE) are disordered.

This is an uncharacterized protein from Streptococcus pyogenes serotype M6 (strain ATCC BAA-946 / MGAS10394).